Consider the following 1005-residue polypeptide: MSDKPKTDAAQSGNDYSKTLFLPQTEFPMRAGLPQREPELLKRWEEMDLYGKLRESARGRAKFVLHDGPPYANGNIHIGHALNKILKDVVTKSQQMLGFDSNYVPGWDCHGLPIEWKIEEENYRSKGKPKPNFKDSAAIIAFRKECRAYADKWLNVQREEFKRLGVIGDWDHPYATMNYAAEAQIARELMKFAANGTLYRGSKPVMWSVVEKTALAEAEVEYEDYTSDTVWVKFPVKTGDASTKDASVVIWTTTPWTLPGNRAISFSSKIAYGLYKVTDAPADNWAKTGDLLILADGLAESVFKQARVVAYEKVSDVGADVLKASECAHPLQGLAGGYEFTVPLLDGDHVTDDTGTGFVHTAPGHGREDFDIWMHNARALEARGISSVIPYTVDENGALTEQAPGFTGKRVINDKGEKGDANEAVIQALIARGALLARGKLKHQYPHSWRSKKPVIFRNTPQWFIAMDKDIVDDGVAKPGDTLRARALQAISVTQWVPPAGQNRINGMISGRPDWVISRQRAWGVPIAVFIKDKGDGSVEILQDEIVNQRIAEAFMQEGADAWYAEGAAERFLGDRAAEGWRKVDDILDVWFDSGSTHAFVLEDAQNFPGLAGIRRKVDGGADTVMYLEGSDQHRGWFHSSLLESCGTRGRAPYDVVLTHGFTLDEQGRKMSKSLGNTTDPAKVIASSGADILRLWVCATDYADDQRIGPEILKNVVETYRKLRNSIRWMLGTLHHYHRDEAVAFADMPELERLMLHQLAEQSATVRAAYAEFDYKTVVASLAAFMNTELSAFYFDIRKDTLYCDPPSSLARKAALTTIDIICDAILKWLAPVLSFTADEAWSMYRPDAEPSVHLTLFPLDLGEYRDDALAKKWTLIRAVRRVVTGALEVERAAKRIGSSLEASPMIYLPEAFMGDIFDVDWAEICITSNAMVEILRGNDTPPADAFRLPELADVAVVVERAQGTKCARSWKILSSVGSDAEYPDVSPRDAQALREWKALGGAAA.

The 'HIGH' region signature appears at 70 to 80 (PYANGNIHIGH). An L-isoleucyl-5'-AMP-binding site is contributed by Glu-629. The 'KMSKS' region motif lies at 670–674 (KMSKS). Lys-673 serves as a coordination point for ATP.

It belongs to the class-I aminoacyl-tRNA synthetase family. IleS type 1 subfamily. As to quaternary structure, monomer.

The protein resides in the cytoplasm. It catalyses the reaction tRNA(Ile) + L-isoleucine + ATP = L-isoleucyl-tRNA(Ile) + AMP + diphosphate. In terms of biological role, catalyzes the attachment of isoleucine to tRNA(Ile). As IleRS can inadvertently accommodate and process structurally similar amino acids such as valine, to avoid such errors it has two additional distinct tRNA(Ile)-dependent editing activities. One activity is designated as 'pretransfer' editing and involves the hydrolysis of activated Val-AMP. The other activity is designated 'posttransfer' editing and involves deacylation of mischarged Val-tRNA(Ile). The sequence is that of Isoleucine--tRNA ligase from Rhodopseudomonas palustris (strain ATCC BAA-98 / CGA009).